Consider the following 550-residue polypeptide: Phospholipase B-like 1 (550 aa).

An N-terminal signal peptide occupies residues methionine 1–alanine 39. An N-linked (GlcNAc...) (high mannose) asparagine; alternate glycan is attached at asparagine 72. An N-linked (GlcNAc...) (hybrid) asparagine; alternate glycan is attached at asparagine 72. A propeptide spans leucine 210 to histidine 228 (removed in mature form). N-linked (GlcNAc...) (high mannose) asparagine; alternate glycans are attached at residues asparagine 309 and asparagine 412. Asparagine 309 and asparagine 412 each carry an N-linked (GlcNAc...) (hybrid) asparagine; alternate glycan. 2 disulfide bridges follow: cysteine 471–cysteine 476 and cysteine 475–cysteine 490. Asparagine 527 carries an N-linked (GlcNAc...) (high mannose) asparagine; alternate glycan. N-linked (GlcNAc...) (hybrid) asparagine; alternate glycosylation is present at asparagine 527.

It belongs to the phospholipase B-like family. In terms of assembly, may form a homodimer, each monomer is composed of a chain A and a chain B. The maturation cleavages that produces chains A and B are required to open the putative substrate binding pocket. Both chains A and B remain associated in the mature protein.

It is found in the lysosome. Exhibits weak phospholipase activity, acting on various phospholipids, including phosphatidylcholine, phosphatidylinositol, phosphatidylethanolamine and lysophospholipids. However, in view of the small size of the putative binding pocket, it has been proposed that it may act rather as an amidase or a peptidase. This Rattus norvegicus (Rat) protein is Phospholipase B-like 1 (Plbd1).